Here is a 544-residue protein sequence, read N- to C-terminus: CTP synthase (544 aa).

The amidoligase domain stretch occupies residues 1–265 (MTRYIFITGG…DTQVLAYFGL (265 aa)). Residue S13 participates in CTP binding. S13 contributes to the UTP binding site. ATP is bound at residue 14 to 19 (SLGKGL). Y54 is a binding site for L-glutamine. D71 serves as a coordination point for ATP. 2 residues coordinate Mg(2+): D71 and E139. CTP is bound by residues 146–148 (DIE), 186–191 (KTKPTQ), and K222. UTP is bound by residues 186–191 (KTKPTQ) and K222. An ATP-binding site is contributed by V240. The Glutamine amidotransferase type-1 domain maps to 291 to 543 (TIAVVGKYTS…IKAAIEQSRL (253 aa)). Residue G353 participates in L-glutamine binding. Catalysis depends on C380, which acts as the Nucleophile; for glutamine hydrolysis. Residues 381–384 (FGMQ), E404, and R472 contribute to the L-glutamine site. Catalysis depends on residues H516 and E518.

This sequence belongs to the CTP synthase family. Homotetramer.

It catalyses the reaction UTP + L-glutamine + ATP + H2O = CTP + L-glutamate + ADP + phosphate + 2 H(+). The catalysed reaction is L-glutamine + H2O = L-glutamate + NH4(+). The enzyme catalyses UTP + NH4(+) + ATP = CTP + ADP + phosphate + 2 H(+). It participates in pyrimidine metabolism; CTP biosynthesis via de novo pathway; CTP from UDP: step 2/2. Its activity is regulated as follows. Allosterically activated by GTP, when glutamine is the substrate; GTP has no effect on the reaction when ammonia is the substrate. The allosteric effector GTP functions by stabilizing the protein conformation that binds the tetrahedral intermediate(s) formed during glutamine hydrolysis. Inhibited by the product CTP, via allosteric rather than competitive inhibition. Catalyzes the ATP-dependent amination of UTP to CTP with either L-glutamine or ammonia as the source of nitrogen. Regulates intracellular CTP levels through interactions with the four ribonucleotide triphosphates. This is CTP synthase from Azospirillum brasilense.